Here is a 285-residue protein sequence, read N- to C-terminus: Secreted LysM effector slp2 (285 aa).

The signal sequence occupies residues 1–16; that stretch reads MLPITVVTLFAALAAA. Residues 75–143 are disordered; the sequence is GDAAKAGDAA…KGGDAAKGGN (69 aa). The segment covering 85-116 has biased composition (basic and acidic residues); the sequence is KGGDAKGGDAKGGDAKGGDAKGGKGGDAKGGK. Gly residues predominate over residues 117-139; the sequence is GGDAAKGGKGGDAAKGGKGGDAA. LysM domains are found at residues 157-201 and 237-281; these read VEHK…VLKI and FTRV…TINL.

The protein belongs to the secreted LysM effector family.

Might have a role in sequestration of chitin oligosaccharides (breakdown products of fungal cell walls that are released during invasion and act as triggers of host immunity) to dampen host defense. This chain is Secreted LysM effector slp2, found in Pyricularia oryzae (strain 70-15 / ATCC MYA-4617 / FGSC 8958) (Rice blast fungus).